The chain runs to 250 residues: Small ribosomal subunit protein uS2 (250 aa).

This sequence belongs to the universal ribosomal protein uS2 family.

The sequence is that of Small ribosomal subunit protein uS2 from Marinobacter nauticus (strain ATCC 700491 / DSM 11845 / VT8) (Marinobacter aquaeolei).